Consider the following 515-residue polypeptide: ATP-dependent RNA helicase DBP3 (515 aa).

Residues 1-67 (MAKRPLQTEA…SDSRYLPTPE (67 aa)) are disordered. The Q motif signature appears at 100–127 (TSFSFLPESSNDLYLPLEKFSSPTPIQA). The Helicase ATP-binding domain maps to 130–306 (WPLAFAGRDL…ASFTKNPVTV (177 aa)). 143–150 (AETGSGKT) is a binding site for ATP. Residues 252 to 255 (DEAD) carry the DEAD box motif. Positions 335–484 (RLLELLRRYQ…DVPESLLKFG (150 aa)) constitute a Helicase C-terminal domain.

It belongs to the DEAD box helicase family. DDX5/DBP2 subfamily.

The protein localises to the nucleus. Its subcellular location is the nucleolus. The catalysed reaction is ATP + H2O = ADP + phosphate + H(+). Functionally, ATP-dependent RNA helicase required for 60S ribosomal subunit synthesis. Involved in efficient pre-rRNA processing, predominantly at site A3, which is necessary for the normal formation of 25S and 5.8S rRNAs. The chain is ATP-dependent RNA helicase DBP3 (DBP3) from Coccidioides immitis (strain RS) (Valley fever fungus).